We begin with the raw amino-acid sequence, 349 residues long: Thioredoxin-related transmembrane protein 4 (349 aa).

Positions 1–23 (MAGGRCGPQLTALLAAWIAAVAA) are cleaved as a signal peptide. A Thioredoxin domain is found at 30–137 (AALPPEQSRV…FEDLQNYILE (108 aa)). Catalysis depends on nucleophile residues cysteine 64 and cysteine 67. Cysteine 64 and cysteine 67 are joined by a disulfide. Residues 190–210 (VFFVIATLVFGLFMGLVLVVI) traverse the membrane as a helical segment. Over residues 225–240 (RSEQNRRSEEAHRAEQ) the composition is skewed to basic and acidic residues. Residues 225–349 (RSEQNRRSEE…RKSQHADKGL (125 aa)) form a disordered region. Acidic residues-rich tracts occupy residues 242-284 (QDAE…EEDN) and 312-321 (VEPEEAEEGI). A phosphoserine mark is found at serine 251 and serine 259. Residues 335–349 (DSLRQRKSQHADKGL) are compositionally biased toward basic and acidic residues.

The protein resides in the nucleus inner membrane. It localises to the endoplasmic reticulum membrane. This Homo sapiens (Human) protein is Thioredoxin-related transmembrane protein 4 (TMX4).